The primary structure comprises 158 residues: Large ribosomal subunit protein uL16 (158 aa).

Belongs to the universal ribosomal protein uL16 family. Part of the 50S ribosomal subunit.

Functionally, binds 23S rRNA and is also seen to make contacts with the A and possibly P site tRNAs. This chain is Large ribosomal subunit protein uL16, found in Parasynechococcus marenigrum (strain WH8102).